The chain runs to 156 residues: 2-C-methyl-D-erythritol 2,4-cyclodiphosphate synthase (156 aa).

Residues D10 and H12 each contribute to the a divalent metal cation site. 4-CDP-2-C-methyl-D-erythritol 2-phosphate is bound by residues 10 to 12 (DSH) and 36 to 37 (HS). H44 provides a ligand contact to a divalent metal cation. 4-CDP-2-C-methyl-D-erythritol 2-phosphate is bound by residues 58–60 (DIG) and 63–67 (FKDTD).

It belongs to the IspF family. In terms of assembly, homotrimer. The cofactor is a divalent metal cation.

The catalysed reaction is 4-CDP-2-C-methyl-D-erythritol 2-phosphate = 2-C-methyl-D-erythritol 2,4-cyclic diphosphate + CMP. It participates in isoprenoid biosynthesis; isopentenyl diphosphate biosynthesis via DXP pathway; isopentenyl diphosphate from 1-deoxy-D-xylulose 5-phosphate: step 4/6. Its function is as follows. Involved in the biosynthesis of isopentenyl diphosphate (IPP) and dimethylallyl diphosphate (DMAPP), two major building blocks of isoprenoid compounds. Catalyzes the conversion of 4-diphosphocytidyl-2-C-methyl-D-erythritol 2-phosphate (CDP-ME2P) to 2-C-methyl-D-erythritol 2,4-cyclodiphosphate (ME-CPP) with a corresponding release of cytidine 5-monophosphate (CMP). In Aquifex aeolicus (strain VF5), this protein is 2-C-methyl-D-erythritol 2,4-cyclodiphosphate synthase.